A 312-amino-acid chain; its full sequence is Ribonuclease Z (312 aa).

Zn(2+) is bound by residues His63, His65, Asp67, His68, His141, Asp212, and His270. Asp67 functions as the Proton acceptor in the catalytic mechanism.

Belongs to the RNase Z family. Homodimer. Zn(2+) serves as cofactor.

It carries out the reaction Endonucleolytic cleavage of RNA, removing extra 3' nucleotides from tRNA precursor, generating 3' termini of tRNAs. A 3'-hydroxy group is left at the tRNA terminus and a 5'-phosphoryl group is left at the trailer molecule.. Functionally, zinc phosphodiesterase, which displays some tRNA 3'-processing endonuclease activity. Probably involved in tRNA maturation, by removing a 3'-trailer from precursor tRNA. The chain is Ribonuclease Z from Latilactobacillus sakei subsp. sakei (strain 23K) (Lactobacillus sakei subsp. sakei).